The following is a 324-amino-acid chain: Zinc transporter ZIP1 (324 aa).

Residues 1 to 30 (MGPWGEPELLVWRPEAAASEAPVPMGLEVK) are Extracellular-facing. The helical transmembrane segment at 31 to 51 (LGALVLLLVLTLICSLVPVCV) threads the bilayer. At 52–68 (LRRPGANPEASASRQKA) the chain is on the cytoplasmic side. Residues 69-89 (LSLVSCFAGGVFLATCLLDLL) form a helical membrane-spanning segment. Residues 90–104 (PDYLGAIDEALAALH) lie on the Extracellular side of the membrane. A helical transmembrane segment spans residues 105-125 (VTLQFPLQEFILAMGFFLVLV). Residues 126–179 (MEQITLAYKEQSGPPPREETRALLGTVNGGPQHWHDGLGVPQAGGASSAPSALR) are Cytoplasmic-facing. A helical transmembrane segment spans residues 180-200 (ACVLVFSLALHSVFEGLAVGL). Over 201–206 (QRDQAR) the chain is Extracellular. A helical membrane pass occupies residues 207–227 (AMELCLALLLHKGILAVSLSL). Over 228–237 (RLLQSHLRAQ) the chain is Cytoplasmic. Residues 238–258 (VVAGCGILFSCMTPLGIGLGT) form a helical membrane-spanning segment. At 259-272 (ALAESAGPLHQLAQ) the chain is on the extracellular side. Residues 273–293 (SVLEGMAAGTFLYITFLEILP) traverse the membrane as a helical segment. The Cytoplasmic portion of the chain corresponds to 294-303 (QELATSEQRI). The chain crosses the membrane as a helical span at residues 304-324 (LKVILLLAGFALLTGLLFIQI).

Belongs to the ZIP transporter (TC 2.A.5) family.

The protein localises to the cell membrane. Its subcellular location is the endoplasmic reticulum membrane. The catalysed reaction is Zn(2+)(in) = Zn(2+)(out). Functionally, transporter for the divalent cation Zn(2+). Mediates the influx of Zn(2+) into cells from extracellular space. This Bos taurus (Bovine) protein is Zinc transporter ZIP1 (SLC39A1).